Consider the following 288-residue polypeptide: Serpentine receptor class gamma-1 (288 aa).

7 consecutive transmembrane segments (helical) span residues 25-45 (LFLQ…VIYI), 59-79 (FYTI…FSIF), 118-138 (FQIL…LWPL), 148-168 (LKSI…TIAI), 197-217 (FSIL…TMLI), 238-258 (VYLS…FLVL), and 268-288 (ILHG…TYVM).

This sequence belongs to the nematode receptor-like protein srg family.

It localises to the membrane. The protein is Serpentine receptor class gamma-1 (srg-1) of Caenorhabditis elegans.